A 232-amino-acid chain; its full sequence is 7-cyano-7-deazaguanine synthase 1 (232 aa).

An ATP-binding site is contributed by 7 to 17 (CSGGLDSVSLA). Zn(2+) contacts are provided by Cys185, Cys193, Cys196, and Cys199.

It belongs to the QueC family. Zn(2+) is required as a cofactor.

The enzyme catalyses 7-carboxy-7-deazaguanine + NH4(+) + ATP = 7-cyano-7-deazaguanine + ADP + phosphate + H2O + H(+). It functions in the pathway purine metabolism; 7-cyano-7-deazaguanine biosynthesis. Its function is as follows. Catalyzes the ATP-dependent conversion of 7-carboxy-7-deazaguanine (CDG) to 7-cyano-7-deazaguanine (preQ(0)). In Mesorhizobium japonicum (strain LMG 29417 / CECT 9101 / MAFF 303099) (Mesorhizobium loti (strain MAFF 303099)), this protein is 7-cyano-7-deazaguanine synthase 1.